A 627-amino-acid chain; its full sequence is Druantia protein DruC (627 aa).

The protein localises to the cytoplasm. In terms of biological role, component of antiviral defense system Druantia type I, composed of DruA, DruB, DruC, DruD and DruE. Expression of Druantia in E.coli (strain MG1655) confers resistance to phage lambda, SECphi18, SECphi27 and T4. The chain is Druantia protein DruC from Escherichia coli (strain UMEA 4076-1).